A 205-amino-acid polypeptide reads, in one-letter code: Beta-crystallin B2 (205 aa).

Position 2 is an N-acetylalanine (alanine 2). An N-terminal arm region spans residues 2-16 (ASDHQSPATKQQQPS). Beta/gamma crystallin 'Greek key' domains follow at residues 17–56 (SKIVLFEQENFQGRCHELSGPCTSLKEAGMEKIGSILVHS) and 57–101 (GPWV…RPIK). Positions 102–106 (VDSQE) are connecting peptide. Beta/gamma crystallin 'Greek key' domains lie at 107–148 (HKIV…RVQS) and 149–191 (GTWV…RRIR). Residues 193 to 205 (MQWHQRGTFHPTN) form a C-terminal arm region.

This sequence belongs to the beta/gamma-crystallin family. As to quaternary structure, homo/heterodimer, or complexes of higher-order. The structure of beta-crystallin oligomers seems to be stabilized through interactions between the N-terminal arms. The N-terminus is blocked.

Its function is as follows. Crystallins are the dominant structural components of the vertebrate eye lens. The polypeptide is Beta-crystallin B2 (Aquarana catesbeiana (American bullfrog)).